Reading from the N-terminus, the 69-residue chain is MIDTLQARLDEVEAHAAHQDKAVDDLNAVILDQREELDRLTRRVNVMLTRLEALEAAAPGPEVTKPPHY.

Belongs to the SlyX family.

In Maricaulis maris (strain MCS10) (Caulobacter maris), this protein is Protein SlyX homolog.